The sequence spans 524 residues: 2-isopropylmalate synthase (524 aa).

Residues 12–274 enclose the Pyruvate carboxyltransferase domain; sequence VIIFDTTLRD…WNNIETTMLT (263 aa). Residues D21, H209, H211, and N245 each coordinate Mn(2+). Residues 398–524 form a regulatory domain region; it reads KLNSLTVIAG…EAVPAVAAAG (127 aa).

This sequence belongs to the alpha-IPM synthase/homocitrate synthase family. LeuA type 1 subfamily. In terms of assembly, homodimer. The cofactor is Mn(2+).

It is found in the cytoplasm. The catalysed reaction is 3-methyl-2-oxobutanoate + acetyl-CoA + H2O = (2S)-2-isopropylmalate + CoA + H(+). It functions in the pathway amino-acid biosynthesis; L-leucine biosynthesis; L-leucine from 3-methyl-2-oxobutanoate: step 1/4. In terms of biological role, catalyzes the condensation of the acetyl group of acetyl-CoA with 3-methyl-2-oxobutanoate (2-ketoisovalerate) to form 3-carboxy-3-hydroxy-4-methylpentanoate (2-isopropylmalate). The polypeptide is 2-isopropylmalate synthase (Rhodopseudomonas palustris (strain HaA2)).